Consider the following 464-residue polypeptide: ATP synthase subunit beta 2 (464 aa).

G147–T154 contacts ATP.

It belongs to the ATPase alpha/beta chains family. F-type ATPases have 2 components, CF(1) - the catalytic core - and CF(0) - the membrane proton channel. CF(1) has five subunits: alpha(3), beta(3), gamma(1), delta(1), epsilon(1). CF(0) has four main subunits: a(1), b(1), b'(1) and c(9-12).

Its subcellular location is the cell inner membrane. The catalysed reaction is ATP + H2O + 4 H(+)(in) = ADP + phosphate + 5 H(+)(out). In terms of biological role, produces ATP from ADP in the presence of a proton gradient across the membrane. The catalytic sites are hosted primarily by the beta subunits. This Cereibacter sphaeroides (strain ATCC 17029 / ATH 2.4.9) (Rhodobacter sphaeroides) protein is ATP synthase subunit beta 2.